We begin with the raw amino-acid sequence, 192 residues long: Interleukin-18 (192 aa).

The propeptide occupies 1–35 (MAAEPVEDNCISFVEMKFINNTLYFVAENGDLESD).

The protein belongs to the IL-1 family. In terms of assembly, forms a ternary complex with ligand-binding receptor subunit IL18R1 and signaling receptor subunit IL18RAP at the plasma membrane. Mature IL18 first binds to IL18R1 forming a low affinity binary complex, which then interacts with IL18RAP to form a high affinity ternary complex that signals inside the cell. Interacts with cargo receptor TMED10; the interaction mediates the translocation from the cytoplasm into the ERGIC (endoplasmic reticulum-Golgi intermediate compartment) and thereby secretion. Post-translationally, the pro-IL-18 precursor is processed by CASP1, CASP4 or CASP5 to yield its mature, active form. The pro-IL-18 precursor features autoinhibitory interactions between the propeptide and the post-cleavage-site region, preventing recognition by the IL18R1 receptor. Processing by CASP1, CASP4 or CASP5 induces conformational changes to generate critical receptor-binding sites. The mature form is then secreted and released in the extracellular milieu by passing through the gasdermin-D (GSDMD) pore. In contrast, cleavage by CASP3 inactivates IL18.

The protein localises to the cytoplasm. The protein resides in the cytosol. Its subcellular location is the secreted. Functionally, pro-inflammatory cytokine primarily involved in epithelial barrier repair, polarized T-helper 1 (Th1) cell and natural killer (NK) cell immune responses. Upon binding to IL18R1 and IL18RAP, forms a signaling ternary complex which activates NF-kappa-B, triggering synthesis of inflammatory mediators. Synergizes with IL12/interleukin-12 to induce IFNG synthesis from T-helper 1 (Th1) cells and natural killer (NK) cells. Involved in transduction of inflammation downstream of pyroptosis: its mature form is specifically released in the extracellular milieu by passing through the gasdermin-D (GSDMD) pore. This is Interleukin-18 (IL18) from Capra hircus (Goat).